The primary structure comprises 233 residues: Orotidine 5'-phosphate decarboxylase (233 aa).

Substrate is bound by residues Asp12, Lys34, 61–70, Thr120, Arg181, Gln190, Gly210, and Arg211; that span reads DLKFHDIPNT. The active-site Proton donor is Lys63.

The protein belongs to the OMP decarboxylase family. Type 1 subfamily. In terms of assembly, homodimer.

The catalysed reaction is orotidine 5'-phosphate + H(+) = UMP + CO2. It functions in the pathway pyrimidine metabolism; UMP biosynthesis via de novo pathway; UMP from orotate: step 2/2. In terms of biological role, catalyzes the decarboxylation of orotidine 5'-monophosphate (OMP) to uridine 5'-monophosphate (UMP). The sequence is that of Orotidine 5'-phosphate decarboxylase from Hahella chejuensis (strain KCTC 2396).